The chain runs to 400 residues: CCA-adding enzyme (400 aa).

ATP contacts are provided by Gly28 and Arg31. CTP contacts are provided by Gly28 and Arg31. Asp41 and Asp43 together coordinate Mg(2+). Positions 112, 155, 158, 161, and 164 each coordinate ATP. Arg112, Asp155, Arg158, Arg161, and Arg164 together coordinate CTP.

The protein belongs to the tRNA nucleotidyltransferase/poly(A) polymerase family. Bacterial CCA-adding enzyme type 3 subfamily. In terms of assembly, homodimer. Mg(2+) serves as cofactor.

It catalyses the reaction a tRNA precursor + 2 CTP + ATP = a tRNA with a 3' CCA end + 3 diphosphate. The enzyme catalyses a tRNA with a 3' CCA end + 2 CTP + ATP = a tRNA with a 3' CCACCA end + 3 diphosphate. Functionally, catalyzes the addition and repair of the essential 3'-terminal CCA sequence in tRNAs without using a nucleic acid template. Adds these three nucleotides in the order of C, C, and A to the tRNA nucleotide-73, using CTP and ATP as substrates and producing inorganic pyrophosphate. tRNA 3'-terminal CCA addition is required both for tRNA processing and repair. Also involved in tRNA surveillance by mediating tandem CCA addition to generate a CCACCA at the 3' terminus of unstable tRNAs. While stable tRNAs receive only 3'-terminal CCA, unstable tRNAs are marked with CCACCA and rapidly degraded. The chain is CCA-adding enzyme from Staphylococcus epidermidis (strain ATCC 12228 / FDA PCI 1200).